The primary structure comprises 625 residues: MPKILDEINQPNDIKKISAKKYTQLAAEIRRFLIANVSKTGGHLASNLGVVELTMALHLFLDFPEDKLVWDVGHQAYVHKLLTGRKNDFKTLRQYEGMSGFPKRKESDCDAFDTGHSSTSLSVAVGLVKARELSEEQRKVVAVIGDGALSGGMAFEALNNAGRLKENMIIVLNDNNMSISENVGGMSNYLGKARTNYRYMDFKGGLETALKKIPKVGDAIVTTLKQSKDSLKHLFIPGMLFEDMGMTYIGPIDGHNINQMLTALKSASRVNGAVLIHTVTKKGKGYEPAEKEPSKYHGVEPFDIKTGKKLKINSEVSYTEVFGKKLIELAKVRNDVVAITAAMPDGTGLTAFGDVFPNRFFDVGIAEEHAVTFAAGLAAAGFKPVVAVYSTFLQRAYDQILHDVCVGKLPVVFALDRAGIVGNDGETHQGMFDLSYLSHMPGLTVIAPKNSWEFERMLEYCIDFDGPIAIRYPKNTAYLGLEDHKKEIIYGKGELIASEEEIALIAIGSMVETAVLVREHLHKLGLKATLVNARFISPLDEEMLHQLTKSHTLFVTMEENVKRGGFGEEVSVFLCEHDYQGIKHLNISIPNMFVEHGDRTLLKEKLGLDAESIVDKICRQRGMQK.

Thiamine diphosphate-binding positions include His-74 and 115 to 117; that span reads GHS. Asp-146 is a Mg(2+) binding site. Residues 147 to 148, Asn-175, Tyr-286, and Glu-367 each bind thiamine diphosphate; that span reads GA. Residue Asn-175 participates in Mg(2+) binding.

The protein belongs to the transketolase family. DXPS subfamily. As to quaternary structure, homodimer. The cofactor is Mg(2+). It depends on thiamine diphosphate as a cofactor.

It catalyses the reaction D-glyceraldehyde 3-phosphate + pyruvate + H(+) = 1-deoxy-D-xylulose 5-phosphate + CO2. Its pathway is metabolic intermediate biosynthesis; 1-deoxy-D-xylulose 5-phosphate biosynthesis; 1-deoxy-D-xylulose 5-phosphate from D-glyceraldehyde 3-phosphate and pyruvate: step 1/1. Its function is as follows. Catalyzes the acyloin condensation reaction between C atoms 2 and 3 of pyruvate and glyceraldehyde 3-phosphate to yield 1-deoxy-D-xylulose-5-phosphate (DXP). This chain is 1-deoxy-D-xylulose-5-phosphate synthase, found in Lachnoclostridium phytofermentans (strain ATCC 700394 / DSM 18823 / ISDg) (Clostridium phytofermentans).